The following is a 286-amino-acid chain: Flagellin FlaB1 (286 aa).

A required for interaction with FliW region spans residues L231 to R286.

Belongs to the bacterial flagellin family. In terms of assembly, the flagellum consists of an outer layer composed of repeating units of FlaA around a core that contains several antigenically related polypeptides. Interacts via its C-terminus with FliW; a synthetic peptide of residues 229-247 partially blocks binding to FliW.

The protein resides in the periplasmic flagellum. The protein localises to the periplasm. Component of the core of the flagella. This is Flagellin FlaB1 (flaB1) from Treponema pallidum (strain Nichols).